Here is a 460-residue protein sequence, read N- to C-terminus: V-type ATP synthase beta chain (460 aa).

The protein belongs to the ATPase alpha/beta chains family.

Functionally, produces ATP from ADP in the presence of a proton gradient across the membrane. The V-type beta chain is a regulatory subunit. This is V-type ATP synthase beta chain from Clostridium novyi (strain NT).